Reading from the N-terminus, the 429-residue chain is 3-phosphoshikimate 1-carboxyvinyltransferase (429 aa).

Residues lysine 20, serine 21, and arginine 25 each coordinate 3-phosphoshikimate. Residue lysine 20 participates in phosphoenolpyruvate binding. The phosphoenolpyruvate site is built by glycine 89 and arginine 118. Residues serine 164, serine 165, glutamine 166, serine 192, aspartate 311, and lysine 338 each coordinate 3-phosphoshikimate. Phosphoenolpyruvate is bound at residue glutamine 166. Aspartate 311 (proton acceptor) is an active-site residue. Residues arginine 342 and arginine 384 each contribute to the phosphoenolpyruvate site.

It belongs to the EPSP synthase family. In terms of assembly, monomer.

It is found in the cytoplasm. The enzyme catalyses 3-phosphoshikimate + phosphoenolpyruvate = 5-O-(1-carboxyvinyl)-3-phosphoshikimate + phosphate. It participates in metabolic intermediate biosynthesis; chorismate biosynthesis. Functionally, catalyzes the transfer of the enolpyruvyl moiety of phosphoenolpyruvate (PEP) to the 5-hydroxyl of shikimate-3-phosphate (S3P) to produce enolpyruvyl shikimate-3-phosphate and inorganic phosphate. The polypeptide is 3-phosphoshikimate 1-carboxyvinyltransferase (Methanococcus vannielii (strain ATCC 35089 / DSM 1224 / JCM 13029 / OCM 148 / SB)).